A 279-amino-acid polypeptide reads, in one-letter code: Pleckstrin homology domain-containing family F member 1 (279 aa).

In terms of domain architecture, PH spans 35 to 131; the sequence is VLLGEGVLTK…WISHIEECVR (97 aa). The FYVE-type zinc-finger motif lies at 152-212; sequence DKATDICMRC…VCSLCYRELA (61 aa). Positions 158, 161, 175, 178, 183, 186, 204, and 207 each coordinate Zn(2+). The disordered stretch occupies residues 218-264; it reads EEAEEQGAGSPGQPAHLARPICGASSGDDDDSDEDKEGSRDGDWPSS. The span at 244–253 shows a compositional bias: acidic residues; sequence GDDDDSDEDK.

In terms of tissue distribution, highly expressed in heart and skeletal muscle. Weakly expressed in brain, thymus, spleen, kidney, liver, small intestine, placenta and lung.

It localises to the nucleus. It is found in the cytoplasm. The protein localises to the perinuclear region. Its subcellular location is the lysosome. In terms of biological role, may induce apoptosis through the lysosomal-mitochondrial pathway. Translocates to the lysosome initiating the permeabilization of lysosomal membrane (LMP) and resulting in the release of CTSD and CTSL to the cytoplasm. Triggers the caspase-independent apoptosis by altering mitochondrial membrane permeabilization (MMP) resulting in the release of PDCD8. In Homo sapiens (Human), this protein is Pleckstrin homology domain-containing family F member 1 (PLEKHF1).